Reading from the N-terminus, the 247-residue chain is MMEYATHLSRQGYAFIPGDYYRSTEAMQFSNKEDFLDELEELKKGYENLLLDPYSPGNRWRGYAQCKKNEKGELTFGKFNPYKQTKAFNPDTGDIIRDYPLLPEAITRNRLFQTLLHDDLSLVDAYESIGPVDSLTIGIHFFRYQATENEPAYSSPVWLHKDDEDVVFVHMINASPNMLGGDSLIASHPRSIDRVLRLEQLFDTLVVNHDKLHAVTPVGARENSGPAQRDIILITFQKNEEKTACPV.

Residues H160, D162, and H213 each coordinate Fe cation.

The protein belongs to the iron/ascorbate-dependent oxidoreductase family. L-ascorbate is required as a cofactor. Requires Fe(2+) as cofactor.

It catalyses the reaction 3(1)-hydroxy-L-isoleucine + 2-oxoglutarate + O2 = (4S)-3(1),4-dihydroxy-L-isoleucine + succinate + CO2. Catalyzes the hydroxylation of L-4'-hydroxyisoleucine (4'-HIL) at the C-4 position to form L-4,4'-dihydroxyisoleucine (4,4'-DIHIL). Together with HilA, catalyzes the two step conversion of L-isoleucine into L-4,4'-dihydroxyisoleucine. In vitro, in the absence of HilA, can also catalyze the oxidation of L-methionine and the C-4-hydroxylation of L-leucine and L-isoleucine. The sequence is that of 3(1)-hydroxy-L-isoleucine 4-dioxygenase from Pantoea ananatis (strain AJ13355).